Here is an 868-residue protein sequence, read N- to C-terminus: DNA mismatch repair protein MutS (868 aa).

ATP is bound at residue 620–627; the sequence is GPNMGGKS.

Belongs to the DNA mismatch repair MutS family.

In terms of biological role, this protein is involved in the repair of mismatches in DNA. It is possible that it carries out the mismatch recognition step. This protein has a weak ATPase activity. In Xylella fastidiosa (strain 9a5c), this protein is DNA mismatch repair protein MutS.